We begin with the raw amino-acid sequence, 462 residues long: Protein Tube (462 aa).

In terms of domain architecture, Death spans 27 to 152; it reads YSRNTELRRV…SAADFVALDF (126 aa). Positions 218-265 are disordered; sequence RDKSVPQPSGNTPPIAPPRRQQRSTTNSNFATLTGTGTTSTTIPNVPN. Positions 249–259 are enriched in low complexity; the sequence is TLTGTGTTSTT. Tandem repeats lie at residues 262–269 and 286–293. The 5 X approximate repeats stretch occupies residues 262–460; it reads NVPNLTILNP…ACNIPDLSEL (199 aa). The segment covering 301 to 317 has biased composition (polar residues); that stretch reads RATVSDNPSNRTSSTDP. The segment at 301–462 is disordered; that stretch reads RATVSDNPSN…NIPDLSELQQ (162 aa). Repeat unit 3 spans residues 319–326; it reads NIPRITLL. Residues 342–354 are compositionally biased toward low complexity; sequence AKASTATTSTASS. The span at 355–367 shows a compositional bias: polar residues; it reads NNLPMISALNISK. Copy 4 of the repeat occupies 356–363; the sequence is NLPMISAL. Over residues 368-377 the composition is skewed to basic and acidic residues; sequence GSRETLRPES. Over residues 387 to 403 the composition is skewed to acidic residues; that stretch reads DDDDDNDGEEDGEEEYP. Positions 409–424 are enriched in low complexity; that stretch reads NLSNSEQQSSNNDSSL. The span at 425 to 438 shows a compositional bias: polar residues; sequence TTVTGTSGDNSFEL. Over residues 439-449 the composition is skewed to low complexity; sequence TNDSSSTSNDD. Repeat 5 spans residues 453-460; the sequence is NIPDLSEL.

Interacts (via Death domain) with pll (via Death domain). Post-translationally, phosphorylated by pll.

Its subcellular location is the cytoplasm. The protein resides in the cell membrane. In terms of biological role, plays an essential role in the Tl receptor signaling pathway that establishes embryonic dorsoventral polarity; the signal directs import of dl into ventral and ventrolateral nuclei, thereby establishing dorsoventral polarity. Tub recruits pll to the plasma membrane and protein-protein interaction activates pll. Also has a role in pupal pattern formation. The sequence is that of Protein Tube (tub) from Drosophila melanogaster (Fruit fly).